Consider the following 119-residue polypeptide: Beta-2-microglobulin (119 aa).

An N-terminal signal peptide occupies residues 1 to 20; that stretch reads MARSVAVVFLMLLSVVCLDA. Residues 25-114 enclose the Ig-like C1-type domain; it reads PQVQVYTRHP…TTLKEPKVVT (90 aa). Residues cysteine 45 and cysteine 100 are joined by a disulfide bond.

It belongs to the beta-2-microglobulin family. Heterodimer of an alpha chain and a beta chain. Beta-2-microglobulin is the beta-chain of major histocompatibility complex class I molecules.

It localises to the secreted. Functionally, component of the class I major histocompatibility complex (MHC). Involved in the presentation of peptide antigens to the immune system. This Cricetulus griseus (Chinese hamster) protein is Beta-2-microglobulin (B2M).